The following is a 395-amino-acid chain: Demethylmacrocin O-methyltransferase (395 aa).

It catalyses the reaction demethylmacrocin + S-adenosyl-L-methionine = macrocin + S-adenosyl-L-homocysteine + H(+). It functions in the pathway antibiotic biosynthesis; tylosin biosynthesis. Functionally, O-methyltransferase that catalyzes the conversion of demethylmacrocin to macrocin, the penultimate step of tylosin antibiotic biosynthesis. Also able to mediate the conversion of demethyllactenocin to lactenocin. This Streptomyces fradiae (Streptomyces roseoflavus) protein is Demethylmacrocin O-methyltransferase (tylE).